We begin with the raw amino-acid sequence, 118 residues long: MSRRIKKLNQLFRADISALLQKEIRDPRLDTLLSVNEVDISEDMRHANVYVSHLAGDEHKDEILAALNAAAGFFRTEIAKKTDIRYMPVFHFVWDITIERGVRLNTLIDQVIHHQPED.

This sequence belongs to the RbfA family. Monomer. Binds 30S ribosomal subunits, but not 50S ribosomal subunits or 70S ribosomes.

It is found in the cytoplasm. Its function is as follows. One of several proteins that assist in the late maturation steps of the functional core of the 30S ribosomal subunit. Associates with free 30S ribosomal subunits (but not with 30S subunits that are part of 70S ribosomes or polysomes). Required for efficient processing of 16S rRNA. May interact with the 5'-terminal helix region of 16S rRNA. This chain is Ribosome-binding factor A, found in Dehalococcoides mccartyi (strain ATCC BAA-2100 / JCM 16839 / KCTC 5957 / BAV1).